A 684-amino-acid chain; its full sequence is Threonine--tRNA ligase (684 aa).

One can recognise a TGS domain in the interval 1–64 (MTAPNPSSLV…ESDTEVEPVA (64 aa)). A catalytic region spans residues 261–567 (DHRKLGVELD…LTEHYAGAFP (307 aa)). C366, H417, and H544 together coordinate Zn(2+).

This sequence belongs to the class-II aminoacyl-tRNA synthetase family. As to quaternary structure, homodimer. It depends on Zn(2+) as a cofactor.

It is found in the cytoplasm. It carries out the reaction tRNA(Thr) + L-threonine + ATP = L-threonyl-tRNA(Thr) + AMP + diphosphate + H(+). In terms of biological role, catalyzes the attachment of threonine to tRNA(Thr) in a two-step reaction: L-threonine is first activated by ATP to form Thr-AMP and then transferred to the acceptor end of tRNA(Thr). Also edits incorrectly charged L-seryl-tRNA(Thr). The protein is Threonine--tRNA ligase of Mycobacteroides abscessus (strain ATCC 19977 / DSM 44196 / CCUG 20993 / CIP 104536 / JCM 13569 / NCTC 13031 / TMC 1543 / L948) (Mycobacterium abscessus).